We begin with the raw amino-acid sequence, 175 residues long: Sec-independent protein translocase protein TatB (175 aa).

Residues 1–21 traverse the membrane as a helical segment; it reads MFDIGWSELVLIGVVALIAIG. Disordered stretches follow at residues 100 to 132 and 155 to 175; these read KPAE…PTPE and QAPV…AKAS. Residues 111–132 show a composition bias toward low complexity; that stretch reads EAPATSSEALTTPTTPEAPTPE.

This sequence belongs to the TatB family. In terms of assembly, the Tat system comprises two distinct complexes: a TatABC complex, containing multiple copies of TatA, TatB and TatC subunits, and a separate TatA complex, containing only TatA subunits. Substrates initially bind to the TatABC complex, which probably triggers association of the separate TatA complex to form the active translocon.

Its subcellular location is the cell inner membrane. Its function is as follows. Part of the twin-arginine translocation (Tat) system that transports large folded proteins containing a characteristic twin-arginine motif in their signal peptide across membranes. Together with TatC, TatB is part of a receptor directly interacting with Tat signal peptides. TatB may form an oligomeric binding site that transiently accommodates folded Tat precursor proteins before their translocation. In Bradyrhizobium diazoefficiens (strain JCM 10833 / BCRC 13528 / IAM 13628 / NBRC 14792 / USDA 110), this protein is Sec-independent protein translocase protein TatB.